We begin with the raw amino-acid sequence, 267 residues long: 4-hydroxy-2-oxo-heptane-1,7-dioate aldolase (267 aa).

Histidine 45 acts as the Proton acceptor in catalysis. Glutamine 147 contacts substrate. An a divalent metal cation-binding site is contributed by glutamate 149. The substrate site is built by alanine 174 and aspartate 175. An a divalent metal cation-binding site is contributed by aspartate 175.

This sequence belongs to the HpcH/HpaI aldolase family. As to quaternary structure, homohexamer; trimer of dimers. A divalent metal cation serves as cofactor.

It carries out the reaction 4-hydroxy-2-oxoheptanedioate = succinate semialdehyde + pyruvate. The protein operates within aromatic compound metabolism; 4-hydroxyphenylacetate degradation; pyruvate and succinate semialdehyde from 4-hydroxyphenylacetate: step 7/7. Functionally, catalyzes the reversible retro-aldol cleavage of 4-hydroxy-2-ketoheptane-1,7-dioate (HKHD) to pyruvate and succinic semialdehyde. In Shigella flexneri, this protein is 4-hydroxy-2-oxo-heptane-1,7-dioate aldolase.